Consider the following 107-residue polypeptide: Ig kappa chain V-VI region NQ2-48.2.2 (107 aa).

The framework-1 stretch occupies residues 1-23 (QILLTQSPAIMSASPGQKVTMTC). Residues cysteine 23 and cysteine 87 are joined by a disulfide bond. Residues 24–33 (SASSSVSYMH) are complementarity-determining-1. Residues 34–48 (WYQQKSGTSPKRWIY) are framework-2. Residues 49-55 (DTSKLAS) are complementarity-determining-2. Positions 56-87 (GVPARFSGSGSATSYSLTITSMQAEDAATYYC) are framework-3. The complementarity-determining-3 stretch occupies residues 88–96 (QQWSSNPLT). Residues 97–106 (FGAGTKLXLK) are framework-4.

In terms of biological role, anti-2-phenyl oxazolone (PHOX) Antibody. The protein is Ig kappa chain V-VI region NQ2-48.2.2 of Mus musculus (Mouse).